Consider the following 209-residue polypeptide: CAAX box protein 1 (209 aa).

The segment at 182–209 (TAGRPPRDLSPSARPISSPPPETSCVLA) is disordered. C206 carries the post-translational modification Cysteine methyl ester. Residue C206 is the site of S-farnesyl cysteine attachment. A propeptide spans 207 to 209 (VLA) (removed in mature form).

Ubiquitous.

The protein resides in the cell membrane. The chain is CAAX box protein 1 from Homo sapiens (Human).